We begin with the raw amino-acid sequence, 179 residues long: ATP synthase subunit delta (179 aa).

Belongs to the ATPase delta chain family. F-type ATPases have 2 components, F(1) - the catalytic core - and F(0) - the membrane proton channel. F(1) has five subunits: alpha(3), beta(3), gamma(1), delta(1), epsilon(1). F(0) has three main subunits: a(1), b(2) and c(10-14). The alpha and beta chains form an alternating ring which encloses part of the gamma chain. F(1) is attached to F(0) by a central stalk formed by the gamma and epsilon chains, while a peripheral stalk is formed by the delta and b chains.

The protein resides in the cell membrane. Its function is as follows. F(1)F(0) ATP synthase produces ATP from ADP in the presence of a proton or sodium gradient. F-type ATPases consist of two structural domains, F(1) containing the extramembraneous catalytic core and F(0) containing the membrane proton channel, linked together by a central stalk and a peripheral stalk. During catalysis, ATP synthesis in the catalytic domain of F(1) is coupled via a rotary mechanism of the central stalk subunits to proton translocation. In terms of biological role, this protein is part of the stalk that links CF(0) to CF(1). It either transmits conformational changes from CF(0) to CF(1) or is implicated in proton conduction. The chain is ATP synthase subunit delta from Clostridium botulinum (strain Langeland / NCTC 10281 / Type F).